We begin with the raw amino-acid sequence, 257 residues long: Phosphate import ATP-binding protein PstB (257 aa).

The region spanning Ile-11–Ile-252 is the ABC transporter domain. Gly-43–Ser-50 serves as a coordination point for ATP.

Belongs to the ABC transporter superfamily. Phosphate importer (TC 3.A.1.7) family. As to quaternary structure, the complex is composed of two ATP-binding proteins (PstB), two transmembrane proteins (PstC and PstA) and a solute-binding protein (PstS).

The protein localises to the cell inner membrane. The enzyme catalyses phosphate(out) + ATP + H2O = ADP + 2 phosphate(in) + H(+). In terms of biological role, part of the ABC transporter complex PstSACB involved in phosphate import. Responsible for energy coupling to the transport system. This Salmonella choleraesuis (strain SC-B67) protein is Phosphate import ATP-binding protein PstB.